The primary structure comprises 194 residues: Large ribosomal subunit protein eL15 (194 aa).

Positions 162–173 are enriched in basic residues; it reads KTSAGRRARGLH. The segment at 162–194 is disordered; that stretch reads KTSAGRRARGLHNRGTGTEKCRPSLTSHKNQGK. Residues 185–194 show a composition bias toward polar residues; that stretch reads SLTSHKNQGK.

Belongs to the eukaryotic ribosomal protein eL15 family.

The chain is Large ribosomal subunit protein eL15 from Methanocorpusculum labreanum (strain ATCC 43576 / DSM 4855 / Z).